The primary structure comprises 285 residues: Glutamate racemase (285 aa).

Substrate is bound by residues 28 to 29 (DS) and 60 to 61 (YG). Cysteine 92 functions as the Proton donor/acceptor in the catalytic mechanism. 93-94 (NT) is a binding site for substrate. Cysteine 204 serves as the catalytic Proton donor/acceptor. 205–206 (TH) is a substrate binding site.

Belongs to the aspartate/glutamate racemases family.

The enzyme catalyses L-glutamate = D-glutamate. The protein operates within cell wall biogenesis; peptidoglycan biosynthesis. Functionally, provides the (R)-glutamate required for cell wall biosynthesis. The polypeptide is Glutamate racemase (Shigella flexneri serotype 5b (strain 8401)).